The sequence spans 534 residues: Cytochrome P450 monooxygenase CYP4 (534 aa).

Residues 46–66 form a helical membrane-spanning segment; the sequence is TIIFCVLMSLVGYIVSRIIWG. The N-linked (GlcNAc...) asparagine glycan is linked to N220. Residue C477 coordinates heme. The N-linked (GlcNAc...) asparagine glycan is linked to N515.

This sequence belongs to the cytochrome P450 family. The cofactor is heme.

It localises to the membrane. Its pathway is secondary metabolite biosynthesis. Functionally, cytochrome P450 monooxygenase; part of the gene cluster that mediates the biosynthesis of a tyrosine-derived cytochalasan acting as a fungal signal recognized by resistant rice plants and leads to avirulence in Pi33 resistant rice cultivars. The first step in the pathway is catalyzed by the hybrid PKS-NRPS ACE1, assisted by the enoyl reductase RAP1, that are responsible for fusion of the tyrosine precursor and the polyketide backbone. The polyketide synthase module (PKS) of ACE1 is responsible for the synthesis of the polyketide backbone and the downstream nonribosomal peptide synthetase (NRPS) amidates the carboxyl end of the polyketide with the tyrosine precursor. Because ACE1 lacks a designated enoylreductase (ER) domain, the required activity is provided the enoyl reductase RAP1. Reduction by the hydrolyase ORFZ, followed by dehydration and intra-molecular Diels-Alder cyclization by the Diels-Alderase ORF3 then yield the required isoindolone-fused macrocycle. A number of oxidative steps catalyzed by the tailoring enzymes identified within the cluster, including cytochrome P450 monooxygenases CYP1 to CYP4, the FAD-linked oxidoreductase OXR2 and the short-chain dehydrogenase/reductase OXR1, are further required to afford the final cytochalasans that confer avirulence and which have still to be identified. The monooxygenase CYP1 has been shown to be a site-selective C-18 hydroxylase whereas the function of CYP3 is the site-selective epoxidation of the C-6/C-7 olefin that is present in some intermediate compounds. Finally, SYN2 and RAP2 are not required for avirulence in Pi33 resistant rice cultivars. The chain is Cytochrome P450 monooxygenase CYP4 from Pyricularia oryzae (strain 70-15 / ATCC MYA-4617 / FGSC 8958) (Rice blast fungus).